Here is a 390-residue protein sequence, read N- to C-terminus: 23S rRNA (uracil(747)-C(5))-methyltransferase RlmC (390 aa).

Residues Cys-12, Cys-20, Cys-23, and Cys-100 each contribute to the [4Fe-4S] cluster site. S-adenosyl-L-methionine contacts are provided by Gln-225, Phe-254, Glu-275, and Asn-322. Cys-349 (nucleophile) is an active-site residue.

It belongs to the class I-like SAM-binding methyltransferase superfamily. RNA M5U methyltransferase family. RlmC subfamily.

The catalysed reaction is uridine(747) in 23S rRNA + S-adenosyl-L-methionine = 5-methyluridine(747) in 23S rRNA + S-adenosyl-L-homocysteine + H(+). Catalyzes the formation of 5-methyl-uridine at position 747 (m5U747) in 23S rRNA. The sequence is that of 23S rRNA (uracil(747)-C(5))-methyltransferase RlmC from Shewanella baltica (strain OS223).